Here is a 486-residue protein sequence, read N- to C-terminus: MNDQSITVRGKDRYKSGVMEYKKMGYWEPSYQPKDTDVIALFRVTPQDGVDPVEACAAVAGESSTATWTVVWTDRLTAAEKYRAKCYRVEPVPGSPGSYFAYIAYDLDLFEPGSIANLTASIIGNVFGFKPLKALRLEDMRLPVAYVKTFQGPATGIVVERERLDKFGRPLLGATVKPKLGLSGRNYGRVVYEALKGGLDFTKDDENINSQPFMHWRERFLYCMEAVNKAQAATGEIKGTYLNVTAATMEDMYERAEFAKELGSTIIMIDLVIGYTAIQSMAKWARRNDMILHLHRAGHSTYTRQRAHGVSFRVIAKWMRLAGVDHIHAGTVVGKLEGDPNTTRGYYDICREDFNPMRLEHGVFFDQHWASLNKLMPVASGGIHAGQMHQLLDLLGEDVVLQFGGGTIGHPRGIAAGATANRVALEAMILARNEGRDYVHEGPEILAKAAQTCTPLREALEIWKDVTFNYESTDSPDFVPTVTPAA.

Substrate contacts are provided by asparagine 125 and threonine 175. Residue lysine 177 is the Proton acceptor of the active site. Lysine 179 is a binding site for substrate. Lysine 203, aspartate 205, and glutamate 206 together coordinate Mg(2+). Residue lysine 203 is modified to N6-carboxylysine. The active-site Proton acceptor is the histidine 295. Residues arginine 296, histidine 328, and serine 380 each coordinate substrate.

The protein belongs to the RuBisCO large chain family. Type I subfamily. In terms of assembly, heterohexadecamer of 8 large chains and 8 small chains. Mg(2+) is required as a cofactor.

The catalysed reaction is 2 (2R)-3-phosphoglycerate + 2 H(+) = D-ribulose 1,5-bisphosphate + CO2 + H2O. It catalyses the reaction D-ribulose 1,5-bisphosphate + O2 = 2-phosphoglycolate + (2R)-3-phosphoglycerate + 2 H(+). Functionally, ruBisCO catalyzes two reactions: the carboxylation of D-ribulose 1,5-bisphosphate, the primary event in carbon dioxide fixation, as well as the oxidative fragmentation of the pentose substrate. Both reactions occur simultaneously and in competition at the same active site. The chain is Ribulose bisphosphate carboxylase large chain 3 from Bradyrhizobium sp. (strain BTAi1 / ATCC BAA-1182).